Consider the following 589-residue polypeptide: Protein MICRORCHIDIA 3 (589 aa).

The interval 1-33 (MAPESKNAGVSVVVNLDSDSDSDNDDGVGGRGA) is disordered. The stretch at 542–589 (MRCEEYVKKETELEQTVSNLAKELEETKSKCARLALLVDAKRREMQQV) forms a coiled coil.

This sequence belongs to the MORC ATPase protein family. In terms of assembly, homodimer and heterodimer. Component of an RNA-directed DNA methylation (RdDM) complex. Requires Mg(2+) as cofactor. It depends on Mn(2+) as a cofactor.

It localises to the nucleus. In terms of biological role, exhibits ATPase activity. Binds DNA/RNA in a non-specific manner and exhibits endonuclease activity. Probably involved in DNA repair. Involved in RNA-directed DNA methylation (RdDM) as a component of the RdDM machinery and required for gene silencing. May also be involved in the regulation of chromatin architecture to maintain gene silencing. In Arabidopsis thaliana (Mouse-ear cress), this protein is Protein MICRORCHIDIA 3.